Reading from the N-terminus, the 864-residue chain is Alanine--tRNA ligase (864 aa).

Zn(2+) contacts are provided by H534, H538, C639, and H643.

This sequence belongs to the class-II aminoacyl-tRNA synthetase family. The cofactor is Zn(2+).

It is found in the cytoplasm. It catalyses the reaction tRNA(Ala) + L-alanine + ATP = L-alanyl-tRNA(Ala) + AMP + diphosphate. In terms of biological role, catalyzes the attachment of alanine to tRNA(Ala) in a two-step reaction: alanine is first activated by ATP to form Ala-AMP and then transferred to the acceptor end of tRNA(Ala). Also edits incorrectly charged Ser-tRNA(Ala) and Gly-tRNA(Ala) via its editing domain. In Aster yellows witches'-broom phytoplasma (strain AYWB), this protein is Alanine--tRNA ligase.